The sequence spans 92 residues: Acylphosphatase (92 aa).

Positions 5–92 (QVQLFVRGRV…GDFFDFRITD (88 aa)) constitute an Acylphosphatase-like domain. Active-site residues include arginine 20 and asparagine 38.

This sequence belongs to the acylphosphatase family.

It catalyses the reaction an acyl phosphate + H2O = a carboxylate + phosphate + H(+). The polypeptide is Acylphosphatase (acyP) (Sorangium cellulosum (strain So ce56) (Polyangium cellulosum (strain So ce56))).